The sequence spans 308 residues: Eukaryotic translation initiation factor 3 subunit G-A (308 aa).

2 disordered regions span residues 1–35 (MPTG…KPDP) and 177–226 (TGDK…ADDN). The segment covering 185-194 (GAEPEPAQAP) has biased composition (low complexity). Basic and acidic residues predominate over residues 209 to 226 (GGSRRGESMQPNRRADDN). Residues 227 to 305 (ATIRVTNLSE…LILNVEWAKP (79 aa)) form the RRM domain.

Belongs to the eIF-3 subunit G family. Component of the eukaryotic translation initiation factor 3 (eIF-3) complex, which is composed of 13 subunits: eif3a, eif3b, eif3c, eif3d, eif3e, eif3f, eif3g, eif3h, eif3i, eif3j, eif3k, eif3l and eif3m.

It is found in the cytoplasm. In terms of biological role, RNA-binding component of the eukaryotic translation initiation factor 3 (eIF-3) complex, which is involved in protein synthesis of a specialized repertoire of mRNAs and, together with other initiation factors, stimulates binding of mRNA and methionyl-tRNAi to the 40S ribosome. The eIF-3 complex specifically targets and initiates translation of a subset of mRNAs involved in cell proliferation. This subunit can bind 18S rRNA. This chain is Eukaryotic translation initiation factor 3 subunit G-A (eif3g-a), found in Xenopus laevis (African clawed frog).